The chain runs to 514 residues: Nucleus accumbens-associated protein 1 (514 aa).

The BTB domain occupies 30–94; sequence CDVSVVVKGH…CYTGRLSMNM (65 aa). Lys167 participates in a covalent cross-link: Glycyl lysine isopeptide (Lys-Gly) (interchain with G-Cter in SUMO1); alternate. Lys167 participates in a covalent cross-link: Glycyl lysine isopeptide (Lys-Gly) (interchain with G-Cter in SUMO2); alternate. Residue Lys182 forms a Glycyl lysine isopeptide (Lys-Gly) (interchain with G-Cter in SUMO2) linkage. Disordered regions lie at residues 183–205 and 242–279; these read RLWD…RKMA and PSMS…EEGT. Ser187 carries the post-translational modification Phosphoserine. Positions 242–251 are enriched in polar residues; it reads PSMSERTSPG. Position 245 is a phosphoserine; by PKC (Ser245). A compositionally biased stretch (low complexity) spans 252–264; sequence TSSAYTSDSPSSY. Positions 267–279 are enriched in acidic residues; that stretch reads EEDEEEDAGEEGT. Residues Lys304, Lys438, Lys466, and Lys485 each participate in a glycyl lysine isopeptide (Lys-Gly) (interchain with G-Cter in SUMO2) cross-link. Residues 360–457 enclose the BEN domain; the sequence is GTNVYITRAQ…DMCTNARRVV (98 aa). Ser492 and Ser496 each carry phosphoserine.

As to quaternary structure, homooligomer; mediated by the BTB domain. Interacts with HDAC3 and HDAC4. Interacts (via BTB domain) with CUL3, PSMD7 and RCOR1. In terms of tissue distribution, ubiquitously expressed with higher expression in the brain, kidney and liver, and at lower levels in heart, lung and testes.

It is found in the nucleus. The protein localises to the cytoplasm. In terms of biological role, functions as a transcriptional repressor. Seems to function as a transcriptional corepressor in neuronal cells through recruitment of HDAC3 and HDAC4. Contributes to tumor progression, and tumor cell proliferation and survival. This may be mediated at least in part through repressing transcriptional activity of GADD45GIP1. Required for recruiting the proteasome from the nucleus to the cytoplasm and dendritic spines. Involved in the acute behavioral and neurological responses to cocaine and amphetamines. The protein is Nucleus accumbens-associated protein 1 (Nacc1) of Mus musculus (Mouse).